Here is a 629-residue protein sequence, read N- to C-terminus: tRNA uridine 5-carboxymethylaminomethyl modification enzyme MnmG (629 aa).

Residues 13–18, valine 125, and serine 180 each bind FAD; that span reads GGGHAG. 273–287 provides a ligand contact to NAD(+); sequence GPRYCPSIEDKVMRF. Glutamine 370 lines the FAD pocket.

It belongs to the MnmG family. Homodimer. Heterotetramer of two MnmE and two MnmG subunits. The cofactor is FAD.

It localises to the cytoplasm. In terms of biological role, NAD-binding protein involved in the addition of a carboxymethylaminomethyl (cmnm) group at the wobble position (U34) of certain tRNAs, forming tRNA-cmnm(5)s(2)U34. The protein is tRNA uridine 5-carboxymethylaminomethyl modification enzyme MnmG of Salmonella agona (strain SL483).